Here is a 126-residue protein sequence, read N- to C-terminus: uncharacterized protein (126 aa).

Helical transmembrane passes span 40–57 (IDKW…VSFF) and 72–94 (ILIA…ILGG).

Its subcellular location is the cell membrane. This is an uncharacterized protein from Pasteurella multocida (strain Pm70).